Reading from the N-terminus, the 180-residue chain is ATP synthase subunit delta (180 aa).

This sequence belongs to the ATPase delta chain family. In terms of assembly, F-type ATPases have 2 components, F(1) - the catalytic core - and F(0) - the membrane proton channel. F(1) has five subunits: alpha(3), beta(3), gamma(1), delta(1), epsilon(1). F(0) has three main subunits: a(1), b(2) and c(10-14). The alpha and beta chains form an alternating ring which encloses part of the gamma chain. F(1) is attached to F(0) by a central stalk formed by the gamma and epsilon chains, while a peripheral stalk is formed by the delta and b chains.

It localises to the cell membrane. Functionally, f(1)F(0) ATP synthase produces ATP from ADP in the presence of a proton or sodium gradient. F-type ATPases consist of two structural domains, F(1) containing the extramembraneous catalytic core and F(0) containing the membrane proton channel, linked together by a central stalk and a peripheral stalk. During catalysis, ATP synthesis in the catalytic domain of F(1) is coupled via a rotary mechanism of the central stalk subunits to proton translocation. In terms of biological role, this protein is part of the stalk that links CF(0) to CF(1). It either transmits conformational changes from CF(0) to CF(1) or is implicated in proton conduction. The chain is ATP synthase subunit delta from Mycoplasma mobile (strain ATCC 43663 / 163K / NCTC 11711) (Mesomycoplasma mobile).